The primary structure comprises 367 residues: Developmentally-regulated GTP-binding protein 1 (367 aa).

The tract at residues S2 to A16 is required for interaction with STK16. The OBG-type G domain occupies A65–Q290. Residues G71–S78, F96–T100, D117–G120, N248–D251, and S271–H273 each bind GTP. Residues S78 and T98 each coordinate Mg(2+). Residues Q290–K366 enclose the TGS domain.

It belongs to the TRAFAC class OBG-HflX-like GTPase superfamily. OBG GTPase family. Requires Mg(2+) as cofactor. It depends on K(+) as a cofactor. Expressed in many adult amd embryonic tissues. In adults, highest levels in ovaries and testes, followed by skeletal muscle, stomach, brain, kidney and liver. Weak expression in heart and brain.

It is found in the nucleus. The protein localises to the cytoplasm. It catalyses the reaction GTP + H2O = GDP + phosphate + H(+). Functionally, catalyzes the conversion of GTP to GDP through hydrolysis of the gamma-phosphate bond in GTP. Binds to microtubules and promotes microtubule polymerization and bundling. GTPase activity is not necessary for these microtubule-related functions. This chain is Developmentally-regulated GTP-binding protein 1 (drg1), found in Xenopus laevis (African clawed frog).